Reading from the N-terminus, the 185-residue chain is MISVNDFRTGLTIAVDNGLWQVLDFQHVKPGKGAAFVRSKLRNLRTGSVQEKTFRAGEKVEKAHIENRRMQYLYASGEAHVFMDNGTYEQIELGEKQIERELKFLKENMEVSIMTYQGEVLGVELPNTVELQVTETEPGIKGDTASNVTKPATLETGLVVQVPIFINEGEMLIINTGEGKYVSRA.

The protein belongs to the elongation factor P family.

The protein localises to the cytoplasm. Its pathway is protein biosynthesis; polypeptide chain elongation. In terms of biological role, involved in peptide bond synthesis. Stimulates efficient translation and peptide-bond synthesis on native or reconstituted 70S ribosomes in vitro. Probably functions indirectly by altering the affinity of the ribosome for aminoacyl-tRNA, thus increasing their reactivity as acceptors for peptidyl transferase. The protein is Elongation factor P of Bacillus anthracis (strain CDC 684 / NRRL 3495).